The primary structure comprises 329 residues: D-alanine--D-alanine ligase (329 aa).

The 207-residue stretch at 120 to 326 (KLWYDALDIP…FHEFLEDCIN (207 aa)) folds into the ATP-grasp domain. 150–205 (AFEKWGKVFVKAARQGSSVGCYSVAEKQAIAKAVNDAFGYSDQVLVEKAVKPRELE) lines the ATP pocket. Positions 280, 293, and 295 each coordinate Mg(2+).

It belongs to the D-alanine--D-alanine ligase family. The cofactor is Mg(2+). Requires Mn(2+) as cofactor.

The protein resides in the cytoplasm. The enzyme catalyses 2 D-alanine + ATP = D-alanyl-D-alanine + ADP + phosphate + H(+). Its pathway is cell wall biogenesis; peptidoglycan biosynthesis. In terms of biological role, cell wall formation. This is D-alanine--D-alanine ligase from Vibrio parahaemolyticus serotype O3:K6 (strain RIMD 2210633).